Reading from the N-terminus, the 82-residue chain is Small ribosomal subunit protein bS16 (82 aa).

This sequence belongs to the bacterial ribosomal protein bS16 family.

This Salmonella agona (strain SL483) protein is Small ribosomal subunit protein bS16.